Here is a 334-residue protein sequence, read N- to C-terminus: Phosphoribosylformylglycinamidine cyclo-ligase (334 aa).

The protein belongs to the AIR synthase family.

The protein localises to the cytoplasm. The catalysed reaction is 2-formamido-N(1)-(5-O-phospho-beta-D-ribosyl)acetamidine + ATP = 5-amino-1-(5-phospho-beta-D-ribosyl)imidazole + ADP + phosphate + H(+). It participates in purine metabolism; IMP biosynthesis via de novo pathway; 5-amino-1-(5-phospho-D-ribosyl)imidazole from N(2)-formyl-N(1)-(5-phospho-D-ribosyl)glycinamide: step 2/2. The sequence is that of Phosphoribosylformylglycinamidine cyclo-ligase from Pyrococcus horikoshii (strain ATCC 700860 / DSM 12428 / JCM 9974 / NBRC 100139 / OT-3).